The primary structure comprises 321 residues: AA9 family lytic polysaccharide monooxygenase C (321 aa).

A signal peptide spans 1-18 (MKLQLIIPFSFLISYVSA). His19 lines the Cu(2+) pocket. The N-linked (GlcNAc...) asparagine glycan is linked to Asn33. Cystine bridges form between Cys57-Cys191 and Cys161-Cys242. Cu(2+) is bound at residue His103. Residues His177 and Gln186 each contribute to the O2 site. Tyr188 is a Cu(2+) binding site. A glycan (N-linked (GlcNAc...) asparagine) is linked at Asn195. The CBM1 domain occupies 283–319 (GTAAIYAQCGGQGWTGATVCASGSKCVVSSAFYSQCL).

The protein belongs to the polysaccharide monooxygenase AA9 family. Cu(2+) serves as cofactor.

It is found in the secreted. The catalysed reaction is [(1-&gt;4)-beta-D-glucosyl]n+m + reduced acceptor + O2 = 4-dehydro-beta-D-glucosyl-[(1-&gt;4)-beta-D-glucosyl]n-1 + [(1-&gt;4)-beta-D-glucosyl]m + acceptor + H2O.. Functionally, major lytic polysaccharide monooxygenase (LPMO) that depolymerizes crystalline and amorphous polysaccharides via the oxidation of scissile alpha- or beta-(1-4)-glycosidic bonds, yielding C1 and C4 oxidation products. Catalysis by LPMOs requires the reduction of the active-site copper from Cu(II) to Cu(I) by a reducing agent and H(2)O(2) or O(2) as a cosubstrate. In Botryotinia fuckeliana (strain B05.10) (Noble rot fungus), this protein is AA9 family lytic polysaccharide monooxygenase C.